The chain runs to 602 residues: Solute carrier organic anion transporter family member 1C1 (602 aa).

Residues M1 to K43 lie on the Cytoplasmic side of the membrane. The chain crosses the membrane as a helical span at residues V44 to L63. Over K64–G82 the chain is Extracellular. Residues V83–G103 form a helical membrane-spanning segment. Residues A104–P109 lie on the Cytoplasmic side of the membrane. Residues K110–E134 form a helical membrane-spanning segment. Residues Q135–E139 are Extracellular-facing. The helical transmembrane segment at I140–L156 threads the bilayer. The Cytoplasmic segment spans residues E157 to Y238. The segment at P190–Q216 is disordered. The segment covering Q193–D214 has biased composition (basic and acidic residues). The helical transmembrane segment at L239–F260 threads the bilayer. The Extracellular segment spans residues G261–R280. A helical transmembrane segment spans residues A281–M304. The Cytoplasmic portion of the chain corresponds to K305–R308. A helical transmembrane segment spans residues I309–L332. The Extracellular segment spans residues F333–F444. Positions R360–G415 constitute a Kazal-like domain. 3 cysteine pairs are disulfide-bonded: C366-C396, C372-C392, and C381-C413. 3 N-linked (GlcNAc...) asparagine glycosylation sites follow: N400, N410, and N423. Residues L445–L467 traverse the membrane as a helical segment. At R468–S476 the chain is on the cytoplasmic side. A helical membrane pass occupies residues F477 to I502. Over D503–T536 the chain is Extracellular. Residues V537–L554 traverse the membrane as a helical segment. The Cytoplasmic portion of the chain corresponds to K555 to L602.

It belongs to the organo anion transporter (TC 2.A.60) family.

The protein localises to the cell membrane. The catalysed reaction is 3,3',5'-triiodo-L-thyronine(out) = 3,3',5'-triiodo-L-thyronine(in). The enzyme catalyses L-thyroxine(out) = L-thyroxine(in). It carries out the reaction L-thyroxine sulfate(out) = L-thyroxine sulfate(in). Functionally, mediates the Na(+)-independent high affinity transport of organic anions such as the thyroid hormones L-thyroxine (T4), L-thyroxine sulfate (T4S), and 3,3',5'-triiodo-L-thyronine (reverse T3, rT3) at the plasma membrane. Regulates T4 levels in different brain regions by transporting T4, and also by serving as an export pump for T4S, which is a source of T4 after hydrolysis by local sulfatases. Increases the access of these substrates to the intracellular sites where they are metabolized by the deiodinases. Other potential substrates, such as triiodothyronine (T3), 17-beta-glucuronosyl estradiol (17beta-estradiol 17-O-(beta-D-glucuronate)), estrone-3-sulfate (E1S) and sulfobromophthalein (BSP) are transported with much lower efficiency. Transports T4 and E1S in a pH-insensitive manner. Facilitates the transport of thyroid hormones across the blood-brain barrier and into glia and neuronal cells in the brain. The chain is Solute carrier organic anion transporter family member 1C1 (SLCO1C1) from Macaca fascicularis (Crab-eating macaque).